The sequence spans 110 residues: Nucleoid-associated protein PsycPRwf_1729 (110 aa).

This sequence belongs to the YbaB/EbfC family. Homodimer.

It localises to the cytoplasm. The protein resides in the nucleoid. Functionally, binds to DNA and alters its conformation. May be involved in regulation of gene expression, nucleoid organization and DNA protection. In Psychrobacter sp. (strain PRwf-1), this protein is Nucleoid-associated protein PsycPRwf_1729.